Reading from the N-terminus, the 664-residue chain is UvrABC system protein C (664 aa).

Positions 63–141 (LRPGVYRMYD…IKRYRPPYNI (79 aa)) constitute a GIY-YIG domain. The 36-residue stretch at 254-289 (THVQKKLVTAMEQASNDLNYELAAVYRDRLKALAFI) folds into the UVR domain.

This sequence belongs to the UvrC family. In terms of assembly, interacts with UvrB in an incision complex.

The protein localises to the cytoplasm. In terms of biological role, the UvrABC repair system catalyzes the recognition and processing of DNA lesions. UvrC both incises the 5' and 3' sides of the lesion. The N-terminal half is responsible for the 3' incision and the C-terminal half is responsible for the 5' incision. The polypeptide is UvrABC system protein C (Zymomonas mobilis subsp. mobilis (strain ATCC 31821 / ZM4 / CP4)).